A 245-amino-acid chain; its full sequence is Collagen triple helix repeat-containing protein 1 (245 aa).

The first 32 residues, 1–32 (MHPQGRAASPQLLLGLFLVLLLLLQLSAPSSA), serve as a signal peptide directing secretion. The region spanning 59 to 92 (QGPAGVPGRDGSPGANGIPGTPGIPGRDGFKGEK) is the Collagen-like domain. The segment at 64–87 (VPGRDGSPGANGIPGTPGIPGRDG) is disordered. N-linked (GlcNAc...) asparagine glycosylation occurs at N188.

Post-translationally, N-glycosylated. In terms of tissue distribution, expressed after injury in the carotid arteries (at protein level). Expressed in brain, lung, and after injury in fibroblasts of the adventitia and the neointima of the arteries.

The protein resides in the secreted. It is found in the extracellular space. The protein localises to the extracellular matrix. Functionally, its overexpression in smooth muscle cell lines increases their migratory ability and inhibits collagen type I expression. May act as a negative regulator of collagen matrix deposition. This is Collagen triple helix repeat-containing protein 1 (Cthrc1) from Rattus norvegicus (Rat).